The primary structure comprises 1349 residues: Membrane-associated phosphatidylinositol transfer protein 2 (1349 aa).

Residues Glu262–Glu344 are disordered. The span at Lys302–Arg322 shows a compositional bias: low complexity. A phosphoserine mark is found at Ser337, Ser341, Ser368, and Ser589. The span at Gly618–Gly631 shows a compositional bias: gly residues. A disordered region spans residues Gly618–Tyr671. At Ser644 the chain carries Phosphoserine. Basic and acidic residues predominate over residues Gly653–Asp667. Phosphoserine is present on residues Ser700, Ser701, and Ser702. The region spanning Phe715–Arg963 is the DDHD domain. Arg828 carries the post-translational modification Omega-N-methylarginine. The segment at Leu876–Ala900 is disordered. The span at Ala878 to Pro888 shows a compositional bias: pro residues. Ser1277 carries the phosphoserine modification. Residues Thr1296–Ser1326 form a disordered region.

This sequence belongs to the PtdIns transfer protein family. PI transfer class IIA subfamily. In terms of assembly, interacts with PTK2B via its C-terminus. Interacts with CPNE4 (via VWFA domain). In terms of tissue distribution, highly expressed in brain, heart, ovary, testis and thymus. Detected in small intestine, prostate, pancreas, skeletal muscle, liver, colon and placenta.

It is found in the endomembrane system. In terms of biological role, catalyzes the transfer of phosphatidylinositol and phosphatidylcholine between membranes (in vitro). Binds calcium ions. The polypeptide is Membrane-associated phosphatidylinositol transfer protein 2 (PITPNM2) (Homo sapiens (Human)).